The following is a 362-amino-acid chain: Chorismate synthase (362 aa).

Residues arginine 48 and arginine 54 each contribute to the NADP(+) site. Residues 125 to 127, 238 to 239, glycine 278, 293 to 297, and arginine 319 each bind FMN; these read RSS, NA, and KPTSS.

It belongs to the chorismate synthase family. Homotetramer. It depends on FMNH2 as a cofactor.

The catalysed reaction is 5-O-(1-carboxyvinyl)-3-phosphoshikimate = chorismate + phosphate. Its pathway is metabolic intermediate biosynthesis; chorismate biosynthesis; chorismate from D-erythrose 4-phosphate and phosphoenolpyruvate: step 7/7. Catalyzes the anti-1,4-elimination of the C-3 phosphate and the C-6 proR hydrogen from 5-enolpyruvylshikimate-3-phosphate (EPSP) to yield chorismate, which is the branch point compound that serves as the starting substrate for the three terminal pathways of aromatic amino acid biosynthesis. This reaction introduces a second double bond into the aromatic ring system. This is Chorismate synthase from Psychromonas ingrahamii (strain DSM 17664 / CCUG 51855 / 37).